Here is a 131-residue protein sequence, read N- to C-terminus: MSWQTYVDDHLMCEIEGNHLTSAAIIGQDGSVWAQSSTFPQFKPEEITAIMNDFNEPGSLAPTGLYLSGTKYMVIQGEPGAVIRGKKGPGGVTVKKTNQALIIGIYDEPMTPGQCNMIVERLGDYLIDQGL.

It belongs to the profilin family. In terms of assembly, occurs in many kinds of cells as a complex with monomeric actin in a 1:1 ratio.

The protein localises to the cytoplasm. Its subcellular location is the cytoskeleton. Its function is as follows. Binds to actin and affects the structure of the cytoskeleton. At high concentrations, profilin prevents the polymerization of actin, whereas it enhances it at low concentrations. By binding to PIP2, it inhibits the formation of IP3 and DG. The protein is Profilin-1 (PRO1) of Ricinus communis (Castor bean).